The following is a 233-amino-acid chain: Small ribosomal subunit protein eS4 (233 aa).

An S4 RNA-binding domain is found at 37–99 (VPLVVVLRDV…RDEYYRVFPD (63 aa)).

The protein belongs to the eukaryotic ribosomal protein eS4 family.

This Halobacterium salinarum (strain ATCC 29341 / DSM 671 / R1) protein is Small ribosomal subunit protein eS4.